The following is a 1213-amino-acid chain: Filamin-A-interacting protein 1 (1213 aa).

The tract at residues 1–70 (MRSRNQGGES…TSGECERKTK (70 aa)) is disordered. The span at 61–70 (TSGECERKTK) shows a compositional bias: basic and acidic residues. At serine 138 the chain carries Phosphoserine. Coiled-coil stretches lie at residues 192-591 (DYMN…ELSC) and 624-781 (PEDN…LSKR). Disordered regions lie at residues 878-900 (NGPSITQEKGPRTNSSPGHPGEV) and 949-976 (KPRITIIPSPNVMPQKQKSGDTTLGPER). Composition is skewed to polar residues over residues 880–894 (PSITQEKGPRTNSSP) and 960–970 (VMPQKQKSGDT). At serine 979 the chain carries Phosphoserine. A disordered region spans residues 1103-1213 (VSTGTVLRSP…STTSLGGGKG (111 aa)). The span at 1125 to 1138 (VTSTITITPVTTSS) shows a compositional bias: low complexity. Residues 1139–1156 (ARGTQSVSGQDGSSQRPT) show a composition bias toward polar residues. The span at 1168-1179 (AGKPVVAAPGAG) shows a compositional bias: low complexity.

This sequence belongs to the FILIP1 family. In terms of assembly, interacts with FLNA. Interacts with RHOD (in GTP-bound form). As to expression, moderately expressed in adult heart and brain. Weakly expressed in lung, skeletal muscle, ovary, testis, kidney, and fetal brain, and hardly detectable in liver, pancreas, spleen, and fetal liver. Within brain, moderate expression is found in amygdala and caudate nucleus. Expressed in skin fibroblasts.

It is found in the cytoplasm. The protein resides in the cytoskeleton. By acting through a filamin-A/F-actin axis, it controls the start of neocortical cell migration from the ventricular zone. May be able to induce the degradation of filamin-A. The chain is Filamin-A-interacting protein 1 (FILIP1) from Homo sapiens (Human).